We begin with the raw amino-acid sequence, 247 residues long: 2,3-bisphosphoglycerate-dependent phosphoglycerate mutase (247 aa).

Substrate is bound by residues 8 to 15, 21 to 22, Arg60, 87 to 90, Lys98, 114 to 115, and 183 to 184; these read RHGESTWN, TG, ERHY, RR, and GN. The Tele-phosphohistidine intermediate role is filled by His9. Catalysis depends on Glu87, which acts as the Proton donor/acceptor.

Belongs to the phosphoglycerate mutase family. BPG-dependent PGAM subfamily. Homodimer.

It carries out the reaction (2R)-2-phosphoglycerate = (2R)-3-phosphoglycerate. It functions in the pathway carbohydrate degradation; glycolysis; pyruvate from D-glyceraldehyde 3-phosphate: step 3/5. Functionally, catalyzes the interconversion of 2-phosphoglycerate and 3-phosphoglycerate. This chain is 2,3-bisphosphoglycerate-dependent phosphoglycerate mutase, found in Paracidovorax citrulli (strain AAC00-1) (Acidovorax citrulli).